The primary structure comprises 279 residues: 4-hydroxy-3-methylbut-2-enyl diphosphate reductase (279 aa).

Residue C12 coordinates [4Fe-4S] cluster. The (2E)-4-hydroxy-3-methylbut-2-enyl diphosphate site is built by H40 and H72. Dimethylallyl diphosphate-binding residues include H40 and H72. Isopentenyl diphosphate-binding residues include H40 and H72. Residue C94 coordinates [4Fe-4S] cluster. H122 provides a ligand contact to (2E)-4-hydroxy-3-methylbut-2-enyl diphosphate. H122 provides a ligand contact to dimethylallyl diphosphate. An isopentenyl diphosphate-binding site is contributed by H122. E124 serves as the catalytic Proton donor. Position 161 (T161) interacts with (2E)-4-hydroxy-3-methylbut-2-enyl diphosphate. C189 provides a ligand contact to [4Fe-4S] cluster. 3 residues coordinate (2E)-4-hydroxy-3-methylbut-2-enyl diphosphate: S217, N219, and S261. Dimethylallyl diphosphate contacts are provided by S217, N219, and S261. S217, N219, and S261 together coordinate isopentenyl diphosphate.

The protein belongs to the IspH family. It depends on [4Fe-4S] cluster as a cofactor.

It carries out the reaction isopentenyl diphosphate + 2 oxidized [2Fe-2S]-[ferredoxin] + H2O = (2E)-4-hydroxy-3-methylbut-2-enyl diphosphate + 2 reduced [2Fe-2S]-[ferredoxin] + 2 H(+). The catalysed reaction is dimethylallyl diphosphate + 2 oxidized [2Fe-2S]-[ferredoxin] + H2O = (2E)-4-hydroxy-3-methylbut-2-enyl diphosphate + 2 reduced [2Fe-2S]-[ferredoxin] + 2 H(+). It functions in the pathway isoprenoid biosynthesis; dimethylallyl diphosphate biosynthesis; dimethylallyl diphosphate from (2E)-4-hydroxy-3-methylbutenyl diphosphate: step 1/1. It participates in isoprenoid biosynthesis; isopentenyl diphosphate biosynthesis via DXP pathway; isopentenyl diphosphate from 1-deoxy-D-xylulose 5-phosphate: step 6/6. Functionally, catalyzes the conversion of 1-hydroxy-2-methyl-2-(E)-butenyl 4-diphosphate (HMBPP) into a mixture of isopentenyl diphosphate (IPP) and dimethylallyl diphosphate (DMAPP). Acts in the terminal step of the DOXP/MEP pathway for isoprenoid precursor biosynthesis. The protein is 4-hydroxy-3-methylbut-2-enyl diphosphate reductase of Syntrophotalea carbinolica (strain DSM 2380 / NBRC 103641 / GraBd1) (Pelobacter carbinolicus).